Here is a 403-residue protein sequence, read N- to C-terminus: Multifunctional CCA protein (403 aa).

ATP-binding residues include glycine 8 and arginine 11. The CTP site is built by glycine 8 and arginine 11. The Mg(2+) site is built by aspartate 21 and aspartate 23. Residues arginine 91, arginine 137, and arginine 140 each coordinate ATP. CTP-binding residues include arginine 91, arginine 137, and arginine 140. In terms of domain architecture, HD spans 228–329 (TGIHTLMVAK…LKVLGLLDVW (102 aa)).

This sequence belongs to the tRNA nucleotidyltransferase/poly(A) polymerase family. Bacterial CCA-adding enzyme type 1 subfamily. In terms of assembly, monomer. Can also form homodimers and oligomers. It depends on Mg(2+) as a cofactor. Requires Ni(2+) as cofactor.

The catalysed reaction is a tRNA precursor + 2 CTP + ATP = a tRNA with a 3' CCA end + 3 diphosphate. The enzyme catalyses a tRNA with a 3' CCA end + 2 CTP + ATP = a tRNA with a 3' CCACCA end + 3 diphosphate. Its function is as follows. Catalyzes the addition and repair of the essential 3'-terminal CCA sequence in tRNAs without using a nucleic acid template. Adds these three nucleotides in the order of C, C, and A to the tRNA nucleotide-73, using CTP and ATP as substrates and producing inorganic pyrophosphate. tRNA 3'-terminal CCA addition is required both for tRNA processing and repair. Also involved in tRNA surveillance by mediating tandem CCA addition to generate a CCACCA at the 3' terminus of unstable tRNAs. While stable tRNAs receive only 3'-terminal CCA, unstable tRNAs are marked with CCACCA and rapidly degraded. The polypeptide is Multifunctional CCA protein (Vibrio cholerae serotype O1 (strain ATCC 39315 / El Tor Inaba N16961)).